Consider the following 514-residue polypeptide: Protein phosphatase 1H (514 aa).

Ser7 carries the phosphoserine modification. The 431-residue stretch at 77-507 (ATGYAEVINA…DDISVYVIPL (431 aa)) folds into the PPM-type phosphatase domain. The segment at 109–135 (AVTSTPNRNSSKRRSSLPNGEGLQLKE) is disordered. A Phosphothreonine modification is found at Thr113. 2 positions are modified to phosphoserine: Ser124 and Ser211. Position 213 is an omega-N-methylarginine (Arg213). A Phosphoserine modification is found at Ser221. Thr224 carries the phosphothreonine modification. Ser422 carries the phosphoserine modification.

This sequence belongs to the PP2C family.

The protein localises to the nucleus. It localises to the cytoplasm. It carries out the reaction O-phospho-L-seryl-[protein] + H2O = L-seryl-[protein] + phosphate. It catalyses the reaction O-phospho-L-threonyl-[protein] + H2O = L-threonyl-[protein] + phosphate. Its function is as follows. Dephosphorylates CDKN1B at 'Thr-187', thus removing a signal for proteasomal degradation. This Homo sapiens (Human) protein is Protein phosphatase 1H (PPM1H).